The chain runs to 330 residues: Low-redox potential peroxidase (330 aa).

A signal peptide spans 1–24; that stretch reads MRSSTHIFVSFVVYCGVFVTSAIA. An N-linked (GlcNAc...) asparagine glycan is attached at Asn-27. 3 disulfides stabilise this stretch: Cys-34–Cys-285, Cys-54–Cys-123, and Cys-251–Cys-314. The Ca(2+) site is built by Gly-69, Asp-71, and Ser-73. Residue His-178 participates in heme b binding. 4 residues coordinate Ca(2+): Ser-179, Asp-196, Thr-198, and Asp-203.

Belongs to the peroxidase family. Ligninase subfamily. Requires Ca(2+) as cofactor. Heme b is required as a cofactor.

Its subcellular location is the secreted. The enzyme catalyses 2 a phenolic donor + H2O2 = 2 a phenolic radical donor + 2 H2O. In terms of biological role, can oxidize the lignin redox mediator veratryl alcohol to veratryl aldehyde. May be involved in oxidation of lignocellulose substrates. This chain is Low-redox potential peroxidase (LnP), found in Taiwanofungus camphoratus (Poroid brown-rot fungus).